Here is a 1026-residue protein sequence, read N- to C-terminus: Multidrug resistance protein MdtC (1026 aa).

11 consecutive transmembrane segments (helical) span residues 15 to 35, 333 to 353, 360 to 380, 387 to 407, 431 to 451, 463 to 483, 528 to 548, 853 to 873, 897 to 917, 953 to 973, and 984 to 1004; these read ILIAAAITLCGILGFRLLPVA, EVEETLAISVALVILVVFLFL, LIPAVAVPVSLIGTFAAMYLC, LSLMALTIATGFVVDDAIVVL, VGFTVISMSLSLVAVFLPLLL, FAVTLSVAIGISLVVSLTLTP, LVGVVFLGTVALNIWLYIAIP, LILIVAAIATVYIVLGILYES, LFNAPFSLIALIGIMLLIGIV, PIMMTTLAALFGALPLVLSGG, and ITIVGGLVMSQLLTLYTTPVV.

The protein belongs to the resistance-nodulation-cell division (RND) (TC 2.A.6) family. MdtC subfamily. As to quaternary structure, part of a tripartite efflux system composed of MdtA, MdtB and MdtC. MdtC forms a heteromultimer with MdtB.

It localises to the cell inner membrane. The polypeptide is Multidrug resistance protein MdtC (Salmonella dublin (strain CT_02021853)).